The primary structure comprises 424 residues: Serine--tRNA ligase (424 aa).

229–231 is an L-serine binding site; that stretch reads TAE. Residues 260–262 and V276 each bind ATP; that span reads RKE. An L-serine-binding site is contributed by E283. 347-350 contacts ATP; it reads ELVS. Residue T383 coordinates L-serine.

This sequence belongs to the class-II aminoacyl-tRNA synthetase family. Type-1 seryl-tRNA synthetase subfamily. As to quaternary structure, homodimer. The tRNA molecule binds across the dimer.

The protein resides in the cytoplasm. The enzyme catalyses tRNA(Ser) + L-serine + ATP = L-seryl-tRNA(Ser) + AMP + diphosphate + H(+). It carries out the reaction tRNA(Sec) + L-serine + ATP = L-seryl-tRNA(Sec) + AMP + diphosphate + H(+). It participates in aminoacyl-tRNA biosynthesis; selenocysteinyl-tRNA(Sec) biosynthesis; L-seryl-tRNA(Sec) from L-serine and tRNA(Sec): step 1/1. Its function is as follows. Catalyzes the attachment of serine to tRNA(Ser). Is also able to aminoacylate tRNA(Sec) with serine, to form the misacylated tRNA L-seryl-tRNA(Sec), which will be further converted into selenocysteinyl-tRNA(Sec). This chain is Serine--tRNA ligase, found in Methanosphaera stadtmanae (strain ATCC 43021 / DSM 3091 / JCM 11832 / MCB-3).